Consider the following 122-residue polypeptide: MVSTSSPTARACAKYVRMSPHKVRRVLDQLRGRTYRDALIMLRFMPYRACEPITKVLRSAAANATHNLGLDPATLVISQAYADQGPCLKRFRPRAQGRAYQIRKPTCHITIAVAPQNTADES.

This sequence belongs to the universal ribosomal protein uL22 family. In terms of assembly, part of the 50S ribosomal subunit.

Functionally, this protein binds specifically to 23S rRNA; its binding is stimulated by other ribosomal proteins, e.g. L4, L17, and L20. It is important during the early stages of 50S assembly. It makes multiple contacts with different domains of the 23S rRNA in the assembled 50S subunit and ribosome. Its function is as follows. The globular domain of the protein is located near the polypeptide exit tunnel on the outside of the subunit, while an extended beta-hairpin is found that lines the wall of the exit tunnel in the center of the 70S ribosome. The sequence is that of Large ribosomal subunit protein uL22 from Thermosynechococcus vestitus (strain NIES-2133 / IAM M-273 / BP-1).